The primary structure comprises 128 residues: MFVNGTPVIEIVLSNPLLSVKFPESGSVLAVIDTGYEGFAVVPQDIFKKLRLDELSQHKRALTLPTERLIESTGSYARIIIPELKTFRDGFVETTDGVDEIVLGTEFLEGFKLVLDYCTRSFEISSCW.

This is an uncharacterized protein from Archaeoglobus fulgidus (strain ATCC 49558 / DSM 4304 / JCM 9628 / NBRC 100126 / VC-16).